An 873-amino-acid chain; its full sequence is Protein SEY1 (873 aa).

A disordered region spans residues 1 to 21 (MVANGHFAGSADGQDSSSYEH). Residues 1-749 (MVANGHFAGS…KRSAIGGITQ (749 aa)) are Cytoplasmic-facing. In terms of domain architecture, GB1/RHD3-type G spans 49–307 (GFNYHLISVF…IPADGFAVYA (259 aa)). 59–66 (GSQSTGKS) provides a ligand contact to GTP. Residues 482 to 506 (SNYQQELSLYQKDLERTSGQLRRDE) are a coiled coil. The segment at 676-703 (LDKWIGHTPSSATPADEEDLTPIGGVDD) is disordered. The span at 690-703 (ADEEDLTPIGGVDD) shows a compositional bias: acidic residues. The chain crosses the membrane as a helical span at residues 750–770 (VPLYFYGLLFALGWNEILAVL). At 771–773 (RNP) the chain is on the lumenal side. A helical transmembrane segment spans residues 774 to 794 (VYFLLLFVCAIGAYITYQLNL). Topologically, residues 795 to 873 (WGPIIKMTEA…EDVDDDDDDF (79 aa)) are cytoplasmic. The disordered stretch occupies residues 828 to 873 (RQAMAMSGARNATEEHEMSRLSRKPAERGGRKNRADEDVDDDDDDF). Residues 839 to 863 (ATEEHEMSRLSRKPAERGGRKNRAD) are compositionally biased toward basic and acidic residues. Positions 864–873 (EDVDDDDDDF) are enriched in acidic residues.

It belongs to the TRAFAC class dynamin-like GTPase superfamily. GB1/RHD3 GTPase family. RHD3 subfamily.

The protein localises to the endoplasmic reticulum membrane. Functionally, cooperates with the reticulon proteins and tubule-shaping DP1 family proteins to generate and maintain the structure of the tubular endoplasmic reticulum network. Has GTPase activity, which is required for its function in ER organization. In Ajellomyces capsulatus (strain G186AR / H82 / ATCC MYA-2454 / RMSCC 2432) (Darling's disease fungus), this protein is Protein SEY1.